Here is a 76-residue protein sequence, read N- to C-terminus: Brevinin-2ISb (76 aa).

The N-terminal stretch at 1-22 (MFTMKKSLLVLFFLGTISLSLC) is a signal peptide. The propeptide at 23 to 41 (QEERNADEEDGGEATEEEV) is removed in mature form. Residues Cys-70 and Cys-76 are joined by a disulfide bond.

In terms of tissue distribution, expressed by the skin glands.

The protein resides in the secreted. In terms of biological role, has antimicrobial activity against Gram-negative bacterium E.coli ATCC 8739 (MIC=12.5 ug), against Gram positive bacteria S.aureus ATCC 6538 (MIC=6.3 ug) and B.subtilis ATCC 6633 (MIC=25 ug). Has no activity against methicillin-resistant S.aureus ATCC 43300 (MIC= ug) and fungus C.albicans ATCC 90028. The sequence is that of Brevinin-2ISb from Odorrana ishikawae (Ishikawa's frog).